The primary structure comprises 236 residues: UPF0257 lipoprotein YnfC (236 aa).

Positions 1-16 (MKYKLLPCLLAIFLTG) are cleaved as a signal peptide. Cysteine 17 carries N-palmitoyl cysteine lipidation. A lipid anchor (S-diacylglycerol cysteine) is attached at cysteine 17.

It belongs to the UPF0257 family.

The protein resides in the cell membrane. This chain is UPF0257 lipoprotein YnfC, found in Escherichia coli O17:K52:H18 (strain UMN026 / ExPEC).